The following is a 169-amino-acid chain: Small ribosomal subunit protein bS16 (169 aa).

A disordered region spans residues Ala114–Glu169. Residues Ala129–Ala156 are compositionally biased toward basic and acidic residues. A compositionally biased stretch (acidic residues) spans Ala159–Glu169.

Belongs to the bacterial ribosomal protein bS16 family.

The sequence is that of Small ribosomal subunit protein bS16 from Corynebacterium urealyticum (strain ATCC 43042 / DSM 7109).